A 199-amino-acid chain; its full sequence is Crossover junction endodeoxyribonuclease RuvC (199 aa).

Residues Asp17, Glu76, and Asp148 contribute to the active site. Asp17, Glu76, and Asp148 together coordinate Mg(2+).

It belongs to the RuvC family. Homodimer which binds Holliday junction (HJ) DNA. The HJ becomes 2-fold symmetrical on binding to RuvC with unstacked arms; it has a different conformation from HJ DNA in complex with RuvA. In the full resolvosome a probable DNA-RuvA(4)-RuvB(12)-RuvC(2) complex forms which resolves the HJ. Mg(2+) serves as cofactor.

The protein localises to the cytoplasm. It catalyses the reaction Endonucleolytic cleavage at a junction such as a reciprocal single-stranded crossover between two homologous DNA duplexes (Holliday junction).. In terms of biological role, the RuvA-RuvB-RuvC complex processes Holliday junction (HJ) DNA during genetic recombination and DNA repair. Endonuclease that resolves HJ intermediates. Cleaves cruciform DNA by making single-stranded nicks across the HJ at symmetrical positions within the homologous arms, yielding a 5'-phosphate and a 3'-hydroxyl group; requires a central core of homology in the junction. The consensus cleavage sequence is 5'-(A/T)TT(C/G)-3'. Cleavage occurs on the 3'-side of the TT dinucleotide at the point of strand exchange. HJ branch migration catalyzed by RuvA-RuvB allows RuvC to scan DNA until it finds its consensus sequence, where it cleaves and resolves the cruciform DNA. The polypeptide is Crossover junction endodeoxyribonuclease RuvC (Mannheimia succiniciproducens (strain KCTC 0769BP / MBEL55E)).